Here is a 350-residue protein sequence, read N- to C-terminus: Phosphoribosylformylglycinamidine cyclo-ligase (350 aa).

It belongs to the AIR synthase family.

It is found in the cytoplasm. It carries out the reaction 2-formamido-N(1)-(5-O-phospho-beta-D-ribosyl)acetamidine + ATP = 5-amino-1-(5-phospho-beta-D-ribosyl)imidazole + ADP + phosphate + H(+). Its pathway is purine metabolism; IMP biosynthesis via de novo pathway; 5-amino-1-(5-phospho-D-ribosyl)imidazole from N(2)-formyl-N(1)-(5-phospho-D-ribosyl)glycinamide: step 2/2. The chain is Phosphoribosylformylglycinamidine cyclo-ligase from Cupriavidus metallidurans (strain ATCC 43123 / DSM 2839 / NBRC 102507 / CH34) (Ralstonia metallidurans).